The primary structure comprises 950 residues: Bifunctional glutamine synthetase adenylyltransferase/adenylyl-removing enzyme (950 aa).

An adenylyl removase region spans residues 1-443 (MSLPSPLLPV…VFVTLIGDEE (443 aa)). Residues 450–950 (ERHFNELWDM…WQEWLESSTI (501 aa)) are adenylyl transferase.

The protein belongs to the GlnE family. Mg(2+) serves as cofactor.

The catalysed reaction is [glutamine synthetase]-O(4)-(5'-adenylyl)-L-tyrosine + phosphate = [glutamine synthetase]-L-tyrosine + ADP. It catalyses the reaction [glutamine synthetase]-L-tyrosine + ATP = [glutamine synthetase]-O(4)-(5'-adenylyl)-L-tyrosine + diphosphate. Its function is as follows. Involved in the regulation of glutamine synthetase GlnA, a key enzyme in the process to assimilate ammonia. When cellular nitrogen levels are high, the C-terminal adenylyl transferase (AT) inactivates GlnA by covalent transfer of an adenylyl group from ATP to specific tyrosine residue of GlnA, thus reducing its activity. Conversely, when nitrogen levels are low, the N-terminal adenylyl removase (AR) activates GlnA by removing the adenylyl group by phosphorolysis, increasing its activity. The regulatory region of GlnE binds the signal transduction protein PII (GlnB) which indicates the nitrogen status of the cell. In Vibrio vulnificus (strain YJ016), this protein is Bifunctional glutamine synthetase adenylyltransferase/adenylyl-removing enzyme.